The chain runs to 339 residues: DNA-directed RNA polymerase subunit alpha (339 aa).

Positions 1–233 are alpha N-terminal domain (alpha-NTD); sequence MVREEVAGST…DLFLPFLHAE (233 aa). The segment at 266–339 is alpha C-terminal domain (alpha-CTD); it reads GIPLNCIFID…IDLLKNKLSF (74 aa).

It belongs to the RNA polymerase alpha chain family. As to quaternary structure, in plastids the minimal PEP RNA polymerase catalytic core is composed of four subunits: alpha, beta, beta', and beta''. When a (nuclear-encoded) sigma factor is associated with the core the holoenzyme is formed, which can initiate transcription.

The protein resides in the plastid. It localises to the chloroplast. It carries out the reaction RNA(n) + a ribonucleoside 5'-triphosphate = RNA(n+1) + diphosphate. Functionally, DNA-dependent RNA polymerase catalyzes the transcription of DNA into RNA using the four ribonucleoside triphosphates as substrates. This Aegilops speltoides (Goatgrass) protein is DNA-directed RNA polymerase subunit alpha.